An 819-amino-acid chain; its full sequence is Pentatricopeptide repeat-containing protein At5g02860 (819 aa).

The tract at residues 57–93 (QNPNSRQPISSQTSRNRNRTRIGKSRDPNLGKPWSYH) is disordered. PPR repeat units lie at residues 172–206 (DNSV…GFSL), 207–241 (DVYS…GCKP), 242–277 (TLIT…GIAP), 278–312 (DAYT…GFSY), 313–347 (DKVT…GFSP), 348–382 (SIVT…GTKP), 383–417 (DVFT…GCKP), 418–452 (NICT…GLSP), 453–487 (DIVT…GFVP), 488–522 (ERET…GVTP), 523–557 (DLST…RCKP), 558–592 (NELT…VIEP), 593–627 (RAVL…GFSP), 628–662 (DITT…GFTP), 663–697 (SMAT…GIKP), 698–732 (DIIS…GIVP), 733–767 (DVIT…GCRP), and 768–802 (NQNT…DPHA).

It belongs to the PPR family. P subfamily.

This Arabidopsis thaliana (Mouse-ear cress) protein is Pentatricopeptide repeat-containing protein At5g02860.